The chain runs to 218 residues: Peroxiredoxin-like 2A (218 aa).

A thioredoxin-like fold region spans residues 3 to 101 (MWSIGVGAVG…DELGVPLYAV (99 aa)). Catalysis depends on redox-active residues Cys-74 and Cys-77.

The protein belongs to the peroxiredoxin-like PRXL2 family. PRXL2A subfamily. As to expression, expressed in kidney, liver, skin, and brain. Widely expressed with highest levels detected in adipose tissue.

The protein resides in the cytoplasm. Its subcellular location is the secreted. Its function is as follows. Involved in redox regulation of the cell. Acts as an antioxidant. Inhibits TNFSF11-induced NFKB1 and JUN activation and osteoclast differentiation. May affect bone resorption and help to maintain bone mass. Acts as a negative regulator of macrophage-mediated inflammation by inhibiting macrophage production of inflammatory cytokines, probably through suppression of the MAPK signaling pathway. The polypeptide is Peroxiredoxin-like 2A (Prxl2a) (Mus musculus (Mouse)).